The sequence spans 320 residues: Cytochrome f (320 aa).

An N-terminal signal peptide occupies residues methionine 1–alanine 35. Heme contacts are provided by tyrosine 36, cysteine 56, cysteine 59, and histidine 60. A helical membrane pass occupies residues valine 286–lysine 306.

The protein belongs to the cytochrome f family. The 4 large subunits of the cytochrome b6-f complex are cytochrome b6, subunit IV (17 kDa polypeptide, petD), cytochrome f and the Rieske protein, while the 4 small subunits are PetG, PetL, PetM and PetN. The complex functions as a dimer. It depends on heme as a cofactor.

It localises to the plastid. It is found in the chloroplast thylakoid membrane. Its function is as follows. Component of the cytochrome b6-f complex, which mediates electron transfer between photosystem II (PSII) and photosystem I (PSI), cyclic electron flow around PSI, and state transitions. In Pelargonium hortorum (Common geranium), this protein is Cytochrome f.